We begin with the raw amino-acid sequence, 418 residues long: Xanthosine permease (418 aa).

At 1–9 (MSIAMRLKV) the chain is on the cytoplasmic side. Residues 10-30 (MSFLQYFIWGSWLVTLGSYMI) traverse the membrane as a helical segment. Topologically, residues 31 to 41 (NTLHFTGANVG) are periplasmic. The chain crosses the membrane as a helical span at residues 42 to 62 (MVYSSKGIAAIIMPGIMGIIA). The Cytoplasmic segment spans residues 63-70 (DKWLRAER). 2 consecutive transmembrane segments (helical) span residues 71–91 (AYMLCHLVCAGVLFYAASVTD) and 92–112 (PDMMFWVMLVNAMAFMPTIAL). The Cytoplasmic segment spans residues 113 to 136 (SNSVSYSCLAQAGLDPVTAFPPIR). A helical transmembrane segment spans residues 137–157 (VFGTVGFIVAMWAVSLLHLEL). The Periplasmic segment spans residues 158 to 159 (SS). Residues 160-180 (LQLYIASGASLLLSAYALTLP) form a helical membrane-spanning segment. At 181 to 209 (KIPVAEKKATTSLASKLGLDAFVLFKNPR) the chain is on the cytoplasmic side. Residues 210 to 230 (MAIFFLFAMMLGAVLQITNVF) form a helical membrane-spanning segment. Residues 231–254 (GNPFLHDFARNPEFADSFVVKYPS) lie on the Periplasmic side of the membrane. A helical transmembrane segment spans residues 255–275 (ILLSVSQMAEVGFILTIPFFL). At 276-277 (KR) the chain is on the cytoplasmic side. Residues 278–298 (FGIKTVMLMSMVAWTLRFGFF) traverse the membrane as a helical segment. Residues 299–306 (AYGDPSTT) lie on the Periplasmic side of the membrane. The chain crosses the membrane as a helical span at residues 307–327 (GFILLLLSMIVYGCAFDFFNI). Over 328 to 348 (SGSVFVEQEVDSSIRASAQGL) the chain is Cytoplasmic. The chain crosses the membrane as a helical span at residues 349–369 (FMTMVNGVGAWVGSILSGMAV). Residues 370–381 (DYFSVDGVKDWQ) are Periplasmic-facing. A helical membrane pass occupies residues 382–402 (TIWLVFAGYALFLAVIFFFGF). At 403 to 418 (KYNHDPEKIKHRAVTH) the chain is on the cytoplasmic side.

The protein belongs to the major facilitator superfamily. Nucleoside:H(+) symporter (NHS) (TC 2.A.1.10) family.

Its subcellular location is the cell inner membrane. It catalyses the reaction xanthosine(in) + H(+)(in) = xanthosine(out) + H(+)(out). Transport is abolished by the proton uncoupler 2,4-dinitrophenol. In terms of biological role, uptake of xanthosine. Can also transport other nucleosides such as inosine, adenosine, cytidine, uridine and thymidine. Transport is driven by a proton motive force. This is Xanthosine permease from Escherichia coli (strain K12).